The primary structure comprises 172 residues: Large ribosomal subunit protein uL10 (172 aa).

The protein belongs to the universal ribosomal protein uL10 family. Part of the ribosomal stalk of the 50S ribosomal subunit. The N-terminus interacts with L11 and the large rRNA to form the base of the stalk. The C-terminus forms an elongated spine to which L12 dimers bind in a sequential fashion forming a multimeric L10(L12)X complex.

In terms of biological role, forms part of the ribosomal stalk, playing a central role in the interaction of the ribosome with GTP-bound translation factors. The polypeptide is Large ribosomal subunit protein uL10 (Leifsonia xyli subsp. xyli (strain CTCB07)).